A 120-amino-acid chain; its full sequence is Internal scaffolding protein B (120 aa).

Polar residues predominate over residues 1–37 (MEQFTQNQNQPHTQESVQNTNVSQFRNETVINGSPVS). Residues 1 to 65 (MEQFTQNQNQ…HLEAERQERA (65 aa)) are disordered. Positions 47 to 65 (GLRRDPVQQHLEAERQERA) are enriched in basic and acidic residues.

It belongs to the microviridae B protein family. As to quaternary structure, component of the procapsid complex composed of 60 copies of the internally located B, 240 copies of the external scaffolding protein D, 60 copies of each of the viral structural proteins F and G proteins, and 12 copies of H. The proteolytic cleavage of the internal scaffolding protein B releases the scaffold protein in order to continue virion assembly.

It localises to the host cytoplasm. In terms of biological role, participates in the assembly of the viral procapsid in the cytoplasm. Forms first a 12S pre-assembly complex with protein H, and F and G pentamers, then twelve 12S complexes are joined by the D protein to form the procapsid. Internal scaffold protein B is released from the procapsid upon genome packaging. Autoproteolytic activity cleaves protein B and probably facilitates its removal through the pores of the procapsid. This chain is Internal scaffolding protein B (B), found in Escherichia coli (Bacteriophage G4).